A 356-amino-acid chain; its full sequence is Protein-glutamate methylesterase/protein-glutamine glutaminase 2 (356 aa).

The Response regulatory domain occupies 7–124 (KVLCVDDSAL…RDGLMEYTDT (118 aa)). A 4-aspartylphosphate modification is found at aspartate 58. A CheB-type methylesterase domain is found at 157–349 (LLSTEKLIIL…QRVMARLATY (193 aa)). Residues serine 169, histidine 195, and aspartate 291 contribute to the active site.

It belongs to the CheB family. Post-translationally, phosphorylated by CheA. Phosphorylation of the N-terminal regulatory domain activates the methylesterase activity.

Its subcellular location is the cytoplasm. It catalyses the reaction [protein]-L-glutamate 5-O-methyl ester + H2O = L-glutamyl-[protein] + methanol + H(+). The catalysed reaction is L-glutaminyl-[protein] + H2O = L-glutamyl-[protein] + NH4(+). Involved in chemotaxis. Part of a chemotaxis signal transduction system that modulates chemotaxis in response to various stimuli. Catalyzes the demethylation of specific methylglutamate residues introduced into the chemoreceptors (methyl-accepting chemotaxis proteins or MCP) by CheR. Also mediates the irreversible deamidation of specific glutamine residues to glutamic acid. This chain is Protein-glutamate methylesterase/protein-glutamine glutaminase 2, found in Cupriavidus pinatubonensis (strain JMP 134 / LMG 1197) (Cupriavidus necator (strain JMP 134)).